A 354-amino-acid polypeptide reads, in one-letter code: P2Y purinoceptor 13 (354 aa).

Over 1-49 the chain is Extracellular; the sequence is MTAAIRRQRELSILPKVTLEAMNTTVMQGFNRSERCPRDTRIVQLVFPA. Asn-23 and Asn-31 each carry an N-linked (GlcNAc...) asparagine glycan. The chain crosses the membrane as a helical span at residues 50-70; the sequence is LYTVVFLTGILLNTLALWVFV. Residues 71-77 lie on the Cytoplasmic side of the membrane; the sequence is HIPSSST. Residues 78–98 form a helical membrane-spanning segment; sequence FIIYLKNTLVADLIMTLMLPF. Topologically, residues 99-117 are extracellular; the sequence is KILSDSHLAPWQLRAFVCR. Cys-116 and Cys-194 are disulfide-bonded. The helical transmembrane segment at 118–138 threads the bilayer; the sequence is FSSVIFYETMYVGIVLLGLIA. The Cytoplasmic portion of the chain corresponds to 139–161; that stretch reads FDRFLKIIRPLRNIFLKKPVFAK. Residues 162–182 traverse the membrane as a helical segment; it reads TVSIFIWFFLFFISLPNTILS. Residues 183–211 lie on the Extracellular side of the membrane; sequence NKEATPSSVKKCASLKGPLGLKWHQMVNN. The chain crosses the membrane as a helical span at residues 212–232; the sequence is ICQFIFWTVFILMLVFYVVIA. Residues 233-252 are Cytoplasmic-facing; the sequence is KKVYDSYRKSKSKDRKNNKK. A helical transmembrane segment spans residues 253 to 273; sequence LEGKVFVVVAVFFVCFAPFHF. Residues 274-300 are Extracellular-facing; that stretch reads ARVPYTHSQTNNKTDCRLQNQLFIAKE. Asn-285 carries an N-linked (GlcNAc...) asparagine glycan. The helical transmembrane segment at 301-321 threads the bilayer; sequence TTLFLAATNICMDPLIYIFLC. Residues 322 to 333 are Cytoplasmic-facing; sequence KKFTEKLPCMQG. The disordered stretch occupies residues 335-354; sequence KTTASSQENHSSQTDNITLG.

Belongs to the G-protein coupled receptor 1 family. Strong expression in spleen and adult brain. Lower expression in placenta, lung, liver, spinal cord, thymus, small intestine, uterus, stomach, testis, fetal brain, and adrenal gland. Not detected in pancreas, heart, kidney, skeletal muscle, ovary or fetal aorta. Clearly detected in lymph node and bone marrow, weakly detected in peripheral blood mononuclear cells (PBMC) and in peripheral blood leukocytes (PBL), but not detected in polymorphonuclear cells (PMN). In the brain, detected in all brain regions examined.

It is found in the cell membrane. Receptor for ADP. Coupled to G(i)-proteins. May play a role in hematopoiesis and the immune system. This chain is P2Y purinoceptor 13 (P2RY13), found in Homo sapiens (Human).